The following is a 365-amino-acid chain: tRNA/tmRNA (uracil-C(5))-methyltransferase (365 aa).

Q189, Y217, N222, E238, and D298 together coordinate S-adenosyl-L-methionine. The Nucleophile role is filled by C323. E357 (proton acceptor) is an active-site residue.

The protein belongs to the class I-like SAM-binding methyltransferase superfamily. RNA M5U methyltransferase family. TrmA subfamily.

The enzyme catalyses uridine(54) in tRNA + S-adenosyl-L-methionine = 5-methyluridine(54) in tRNA + S-adenosyl-L-homocysteine + H(+). It catalyses the reaction uridine(341) in tmRNA + S-adenosyl-L-methionine = 5-methyluridine(341) in tmRNA + S-adenosyl-L-homocysteine + H(+). Its function is as follows. Dual-specificity methyltransferase that catalyzes the formation of 5-methyluridine at position 54 (m5U54) in all tRNAs, and that of position 341 (m5U341) in tmRNA (transfer-mRNA). This chain is tRNA/tmRNA (uracil-C(5))-methyltransferase, found in Shewanella sp. (strain ANA-3).